A 264-amino-acid chain; its full sequence is Glutamate racemase (264 aa).

Substrate contacts are provided by residues 9–10 (DS) and 41–42 (YG). Cys-72 functions as the Proton donor/acceptor in the catalytic mechanism. 73–74 (NT) contacts substrate. Residue Cys-183 is the Proton donor/acceptor of the active site. A substrate-binding site is contributed by 184–185 (TH).

It belongs to the aspartate/glutamate racemases family.

It carries out the reaction L-glutamate = D-glutamate. Its pathway is cell wall biogenesis; peptidoglycan biosynthesis. Provides the (R)-glutamate required for cell wall biosynthesis. The polypeptide is Glutamate racemase (Geobacillus kaustophilus (strain HTA426)).